The primary structure comprises 353 residues: Histidinol-phosphate aminotransferase (353 aa).

N6-(pyridoxal phosphate)lysine is present on lysine 209.

The protein belongs to the class-II pyridoxal-phosphate-dependent aminotransferase family. Histidinol-phosphate aminotransferase subfamily. As to quaternary structure, homodimer. It depends on pyridoxal 5'-phosphate as a cofactor.

The catalysed reaction is L-histidinol phosphate + 2-oxoglutarate = 3-(imidazol-4-yl)-2-oxopropyl phosphate + L-glutamate. It functions in the pathway amino-acid biosynthesis; L-histidine biosynthesis; L-histidine from 5-phospho-alpha-D-ribose 1-diphosphate: step 7/9. The protein is Histidinol-phosphate aminotransferase of Buchnera aphidicola subsp. Cinara cedri (strain Cc).